The chain runs to 122 residues: MICOS complex subunit MIC13 homolog QIL1 (122 aa).

Residues 9-25 (GGLVAATVYYTQKVGIW) traverse the membrane as a helical segment.

It belongs to the MICOS complex subunit Mic13 family. Component of the mitochondrial contact site and cristae organizing system (MICOS) complex.

It localises to the mitochondrion inner membrane. In terms of biological role, component of the MICOS complex, a large protein complex of the mitochondrial inner membrane that plays crucial roles in the maintenance of crista junctions, inner membrane architecture, and formation of contact sites to the outer membrane. This Drosophila melanogaster (Fruit fly) protein is MICOS complex subunit MIC13 homolog QIL1.